A 1123-amino-acid polypeptide reads, in one-letter code: Leucine--tRNA ligase, cytoplasmic (1123 aa).

The 'HIGH' region motif lies at 84–94 (PYMNGRLHAGH). The short motif at 757–761 (KMSKS) is the 'KMSKS' region element. K760 contacts ATP.

Belongs to the class-I aminoacyl-tRNA synthetase family.

It is found in the cytoplasm. The enzyme catalyses tRNA(Leu) + L-leucine + ATP = L-leucyl-tRNA(Leu) + AMP + diphosphate. In Neurospora crassa (strain ATCC 24698 / 74-OR23-1A / CBS 708.71 / DSM 1257 / FGSC 987), this protein is Leucine--tRNA ligase, cytoplasmic (leu-6).